A 419-amino-acid polypeptide reads, in one-letter code: [Butirosin acyl-carrier protein]--L-glutamate ligase (419 aa).

In terms of domain architecture, ATP-grasp spans 144–345; it reads RRLMERNGFN…FVESRVLVFN (202 aa). 174–231 lines the ATP pocket; the sequence is ISAGFSKCVLKVPYGSSGKGLKVIDNERNFRFLLNYIQNRQTNVDLLLEGWHPHRLSL. Residues aspartate 298, glutamate 312, and asparagine 314 each coordinate Mg(2+). 3 residues coordinate Mn(2+): aspartate 298, glutamate 312, and asparagine 314.

Monomer. Requires Mg(2+) as cofactor. It depends on Mn(2+) as a cofactor.

The enzyme catalyses holo-[BtrI ACP] + L-glutamate + ATP = gamma-L-glutamyl-[BtrI ACP] + ADP + phosphate. The catalysed reaction is 4-aminobutanoyl-[BtrI ACP] + L-glutamate + ATP = 4-(gamma-L-glutamylamino)butanoyl-[BtrI ACP] + ADP + phosphate + H(+). The protein operates within antibiotic biosynthesis; butirosin biosynthesis. In terms of biological role, ATP-dependent ligase that catalyzes 2 steps in the biosynthesis of the side chain of the aminoglycoside antibiotics in the biosynthetic pathway of butirosin. Mediates the addition of one molecule of L-glutamate to a dedicated acyl-carrier protein. Following decarboxylation of the product by BtrK, adds a second L-glutamate molecule. The polypeptide is [Butirosin acyl-carrier protein]--L-glutamate ligase (btrJ) (Niallia circulans (Bacillus circulans)).